The following is a 130-amino-acid chain: Fumarate reductase subunit C (130 aa).

A run of 3 helical transmembrane segments spans residues 30–50 (EGTS…VFAL), 60–80 (FVSF…LFAA), and 110–130 (IKAL…VALL).

It belongs to the FrdC family. In terms of assembly, part of an enzyme complex containing four subunits: a flavoprotein (FrdA), an iron-sulfur protein (FrdB), and two hydrophobic anchor proteins (FrdC and FrdD).

The protein resides in the cell inner membrane. Functionally, two distinct, membrane-bound, FAD-containing enzymes are responsible for the catalysis of fumarate and succinate interconversion; fumarate reductase is used in anaerobic growth, and succinate dehydrogenase is used in aerobic growth. Anchors the catalytic components of the fumarate reductase complex to the cell inner membrane, binds quinones. The sequence is that of Fumarate reductase subunit C from Yersinia pseudotuberculosis serotype O:1b (strain IP 31758).